The chain runs to 1012 residues: Centriole and centriolar satellite protein OFD1 (1012 aa).

Positions 70-102 (LIGASNSLVADHLQRCGYEYSLSVFFPESGLAK) constitute a LisH domain. Coiled-coil stretches lie at residues 189–557 (QRIK…ENEV) and 622–662 (DSDL…NSAK). Residues 609–665 (TNYPTAWVEGSSPDSDLEFVANTKARVKELQQEAERLEKAFRSYHRRVIKNSAKSPL) are mediates homooligomerization. The tract at residues 615 to 1012 (WVEGSSPDSD…FSHEELDDSW (398 aa)) is mediates the interaction with SDCCAG8. Phosphoserine occurs at positions 663, 669, 686, and 720. The disordered stretch occupies residues 719–744 (GSAASRLRGGTSSRRLSSTPLPKAKR). Low complexity predominate over residues 720–737 (SAASRLRGGTSSRRLSST). Position 735 is a phosphoserine; by PKA (serine 735). Serine 745, serine 774, serine 789, and serine 811 each carry phosphoserine. The tract at residues 757-794 (RSHIASPSPCPDRMPLPSPTESRHSLSIPPVSSPPEQK) is disordered. Residues 764–774 (SPCPDRMPLPS) show a composition bias toward pro residues. 2 disordered regions span residues 824-904 (FESS…LQEV) and 963-1012 (KIIQ…DDSW). Positions 867 to 956 (SVDQKQIEEQ…IKDKSAHSEN (90 aa)) form a coiled coil. Composition is skewed to basic and acidic residues over residues 871-904 (KQIE…LQEV) and 973-982 (SADKSSKKMV).

It belongs to the OFD1 family. Homooligomer. Interacts with LCA5. Interacts with RUVBL1; the interaction is direct and may mediate interaction with the NuA4 histone acetyltransferase complex. Interacts with SDCCAG8; the interaction is direct. Interacts with MAP1LC3B. Interacts with C2CD3; OFD1 may act as a negative regulator of C2CD3. Forms a complex with KIAA0753/OFIP and CEP20/FOR20; the interaction with CEP20 is detected only in the presence of KIAA0753. Interacts with PCM1; this interaction may be mediated by KIAA0753/OFIP. Interacts with TBC1D31; regulates OFD1 activity in cilium assembly. Post-translationally, phosphorylated. Phosphorylation at Ser-735, by the cAMP-dependent protein kinase PKA, triggers ubiquitination and proteasomal degradation of OFD1. Also increases its interaction with TBC1D31 and regulates its function in ciliogenesis. Ubiquitinated by PJA2, upon phosphorylation at Ser-735 by PKA, leads to the proteasomal degradation of OFD1. In terms of tissue distribution, widely expressed. Expressed in 9 and 14 weeks old embryos in metanephric mesenchyme, oral mucosa, lung, heart, nasal and cranial cartilage, and brain. Expressed in metanephros, brain, tongue, and limb.

It localises to the cytoplasm. Its subcellular location is the cytoskeleton. The protein localises to the microtubule organizing center. It is found in the centrosome. The protein resides in the centriole. It localises to the cilium basal body. Its subcellular location is the nucleus. The protein localises to the centriolar satellite. Component of the centrioles controlling mother and daughter centrioles length. Recruits to the centriole IFT88 and centriole distal appendage-specific proteins including CEP164. Involved in the biogenesis of the cilium, a centriole-associated function. The cilium is a cell surface projection found in many vertebrate cells required to transduce signals important for development and tissue homeostasis. Plays an important role in development by regulating Wnt signaling and the specification of the left-right axis. Only OFD1 localized at the centriolar satellites is removed by autophagy, which is an important step in the ciliogenesis regulation. This Homo sapiens (Human) protein is Centriole and centriolar satellite protein OFD1 (OFD1).